Consider the following 62-residue polypeptide: Protein YnfQ (62 aa).

It belongs to the YmcF/YnqF peptide family.

This chain is Protein YnfQ, found in Escherichia coli (strain K12).